Consider the following 350-residue polypeptide: Probable flap endonuclease 1 homolog (350 aa).

The interval 1 to 95 (MGITKLAHLI…AVLEKRAQST (95 aa)) is N-domain. Mg(2+) is bound at residue aspartate 34. Arginine 61 provides a ligand contact to DNA. The Mg(2+) site is built by aspartate 77, glutamate 130, glutamate 132, aspartate 151, and aspartate 153. Residues 110 to 223 (NQECLRLLHL…SRALKLIKEH (114 aa)) form an I-domain region. DNA is bound at residue glutamate 130. DNA-binding residues include glycine 201 and aspartate 203. Residue aspartate 203 coordinates Mg(2+). The interaction with PCNA stretch occupies residues 317–325 (RQSRLEDFF).

Belongs to the XPG/RAD2 endonuclease family. FEN1 subfamily. In terms of assembly, interacts with PCNA. Three molecules of fen1 bind to one PCNA trimer with each molecule binding to one PCNA monomer. PCNA stimulates the nuclease activity without altering cleavage specificity. The cofactor is Mg(2+). Post-translationally, phosphorylated. Phosphorylation upon DNA damage induces relocalization to the nuclear plasma.

The protein localises to the nucleus. It is found in the nucleolus. The protein resides in the nucleoplasm. Its subcellular location is the mitochondrion. Its function is as follows. Structure-specific nuclease with 5'-flap endonuclease and 5'-3' exonuclease activities involved in DNA replication and repair. During DNA replication, cleaves the 5'-overhanging flap structure that is generated by displacement synthesis when DNA polymerase encounters the 5'-end of a downstream Okazaki fragment. It enters the flap from the 5'-end and then tracks to cleave the flap base, leaving a nick for ligation. Also involved in the long patch base excision repair (LP-BER) pathway, by cleaving within the apurinic/apyrimidinic (AP) site-terminated flap. Acts as a genome stabilization factor that prevents flaps from equilibrating into structures that lead to duplications and deletions. Also possesses 5'-3' exonuclease activity on nicked or gapped double-stranded DNA, and exhibits RNase H activity. Also involved in replication and repair of rDNA and in repairing mitochondrial DNA. This Danio rerio (Zebrafish) protein is Probable flap endonuclease 1 homolog.